Consider the following 373-residue polypeptide: Mitochondrial nicotinamide adenine dinucleotide transporter 1 (373 aa).

Residues 1–80 (MTQTDNPVPN…WVPLSSTQIT (80 aa)) are Mitochondrial matrix-facing. 3 Solcar repeats span residues 75 to 166 (SSTQ…SKKF), 174 to 263 (FDFV…LKVR), and 276 to 364 (INLQ…FRNR). The chain crosses the membrane as a helical span at residues 81 to 101 (ALSGAFAGFLSGVAVCPLDVA). The Mitochondrial intermembrane segment spans residues 102-141 (KTRLQAQGLQTRFENPYYRGIMGTLSTIVRDEGPRGLYKG). A helical transmembrane segment spans residues 142-162 (LVPIVLGYFPTWMIYFSVYEF). Residues 163-176 (SKKFFHGIFPQFDF) lie on the Mitochondrial matrix side of the membrane. The helical transmembrane segment at 177–199 (VAQSCAAITAGAASTTLTNPIWV) threads the bilayer. Topologically, residues 200–235 (VKTRLMLQSNLGEHPTHYKGTFDAFRKLFYQEGFKA) are mitochondrial intermembrane. The helical transmembrane segment at 236 to 256 (LYAGLVPSLLGLFHVAIHFPI) threads the bilayer. Residues 257-280 (YEDLKVRFHCYSRENNTNSINLQR) lie on the Mitochondrial matrix side of the membrane. Residues 281–297 (LIMASSVSKMIASAVTY) traverse the membrane as a helical segment. The Mitochondrial intermembrane segment spans residues 298 to 335 (PHEILRTRMQLKSDIPDSIQRRLFPLIKATYAQEGLKG). Residues 336–358 (FYSGFTTNLVRTIPASAITLVSF) form a helical membrane-spanning segment. The Mitochondrial matrix segment spans residues 359-373 (EYFRNRLENISTMVI).

Belongs to the mitochondrial carrier (TC 2.A.29) family.

Its subcellular location is the mitochondrion inner membrane. The catalysed reaction is dAMP(in) + NAD(+)(out) = dAMP(out) + NAD(+)(in). It carries out the reaction dGMP(in) + NAD(+)(out) = dGMP(out) + NAD(+)(in). It catalyses the reaction GMP(in) + NAD(+)(out) = GMP(out) + NAD(+)(in). The enzyme catalyses AMP(in) + NAD(+)(out) = AMP(out) + NAD(+)(in). The catalysed reaction is deamido-NAD(+)(in) + NAD(+)(out) = deamido-NAD(+)(out) + NAD(+)(in). Its function is as follows. Mitochondrial inner membrane carrier protein that mediates the import of NAD(+) into mitochondria. Can transport NAD(+) by unidirectional transport or by exchange with intramitochondrially generated dAMP and dGMP. Also able to transport NAD(+) by exchange with AMP, GMP or deamido-NAD (+) in vitro. The sequence is that of Mitochondrial nicotinamide adenine dinucleotide transporter 1 (YIA6) from Saccharomyces cerevisiae (strain ATCC 204508 / S288c) (Baker's yeast).